Consider the following 1412-residue polypeptide: DNA-directed RNA polymerase subunit beta' (1412 aa).

Zn(2+) is bound by residues Cys70, Cys72, Cys85, and Cys88. Mg(2+) contacts are provided by Asp460, Asp462, and Asp464. Residues Cys814, Cys888, Cys895, and Cys898 each contribute to the Zn(2+) site. Positions 1378-1412 (EREAARQLANPFEDAPVTVDADAPQSDAGQEGSAE) are disordered.

Belongs to the RNA polymerase beta' chain family. The RNAP catalytic core consists of 2 alpha, 1 beta, 1 beta' and 1 omega subunit. When a sigma factor is associated with the core the holoenzyme is formed, which can initiate transcription. The cofactor is Mg(2+). It depends on Zn(2+) as a cofactor.

The catalysed reaction is RNA(n) + a ribonucleoside 5'-triphosphate = RNA(n+1) + diphosphate. DNA-dependent RNA polymerase catalyzes the transcription of DNA into RNA using the four ribonucleoside triphosphates as substrates. This Bordetella petrii (strain ATCC BAA-461 / DSM 12804 / CCUG 43448) protein is DNA-directed RNA polymerase subunit beta'.